The following is a 253-amino-acid chain: Discoidin-1 subunit A (253 aa).

N-acetylserine is present on Ser2. Residues 2-152 (STQGLVQLLA…ISLRCEFYTQ (151 aa)) form the F5/8 type C domain. The Cell attachment site signature appears at 79–81 (RGD).

Tetramer of four different chains (A to D). Stalk cells.

The protein localises to the cytoplasm. Galactose- and N-acetylgalactosamine-binding lectin. May play a role in cell-substratum adhesion rather than in cell-cell adhesion. May be necessary for the maintenance of normal elongate morphology during aggregation. This chain is Discoidin-1 subunit A (dscA-1), found in Dictyostelium discoideum (Social amoeba).